The sequence spans 126 residues: Large ribosomal subunit protein bL12c (126 aa).

The protein belongs to the bacterial ribosomal protein bL12 family. Homodimer. Part of the ribosomal stalk of the 50S ribosomal subunit. Forms a multimeric L10(L12)X complex, where L10 forms an elongated spine to which 2 to 4 L12 dimers bind in a sequential fashion. Binds GTP-bound translation factors.

The protein localises to the plastid. Its subcellular location is the cyanelle. Functionally, forms part of the ribosomal stalk which helps the ribosome interact with GTP-bound translation factors. Is thus essential for accurate translation. The chain is Large ribosomal subunit protein bL12c from Cyanophora paradoxa.